The primary structure comprises 383 residues: Histidine decarboxylase (383 aa).

Histidine 120 contacts substrate. N6-(pyridoxal phosphate)lysine is present on lysine 233.

The protein belongs to the group II decarboxylase family. In terms of assembly, homotetramer. It depends on pyridoxal 5'-phosphate as a cofactor.

It carries out the reaction L-histidine + H(+) = histamine + CO2. The sequence is that of Histidine decarboxylase from Acinetobacter baumannii (strain ATCC 17978 / DSM 105126 / CIP 53.77 / LMG 1025 / NCDC KC755 / 5377).